The sequence spans 201 residues: Adenylyl-sulfate kinase (201 aa).

Residue 35-42 (GLSGSGKS) coordinates ATP. The active-site Phosphoserine intermediate is serine 109.

This sequence belongs to the APS kinase family.

The catalysed reaction is adenosine 5'-phosphosulfate + ATP = 3'-phosphoadenylyl sulfate + ADP + H(+). Its pathway is sulfur metabolism; hydrogen sulfide biosynthesis; sulfite from sulfate: step 2/3. Its function is as follows. Catalyzes the synthesis of activated sulfate. The sequence is that of Adenylyl-sulfate kinase from Prochlorococcus marinus (strain SARG / CCMP1375 / SS120).